The primary structure comprises 566 residues: Pentatricopeptide repeat-containing protein At4g11690 (566 aa).

PPR repeat units lie at residues 93-127, 128-158, 162-196, 197-231, 232-266, 267-301, 302-336, 337-371, 372-406, 407-441, 442-476, 477-511, and 512-546; these read KFRLYEVIINSYVQSQSLNLSISYFNEMVDNGFVP, GSNCFNYLLTFVVGSSSFNQWWSFFNENKSK, DVYSFGILIKGCCEAGEIEKSFDLLIELTEFGFSP, NVVIYTTLIDGCCKKGEIEKAKDLFFEMGKLGLVA, NERTYTVLINGLFKNGVKKQGFEMYEKMQEDGVFP, NLYTYNCVMNQLCKDGRTKDAFQVFDEMRERGVSC, NIVTYNTLIGGLCREMKLNEANKVVDQMKSDGINP, NLITYNTLIDGFCGVGKLGKALSLCRDLKSRGLSP, SLVTYNILVSGFCRKGDTSGAAKMVKEMEERGIKP, SKVTYTILIDTFARSDNMEKAIQLRLSMEELGLVP, DVHTYSVLIHGFCIKGQMNEASRLFKSMVEKNCEP, NEVIYNTMILGYCKEGSSYRALKLLKEMEEKELAP, and NVASYRYMIEVLCKERKSKEAERLVEKMIDSGIDP.

Belongs to the PPR family. P subfamily.

The sequence is that of Pentatricopeptide repeat-containing protein At4g11690 from Arabidopsis thaliana (Mouse-ear cress).